The primary structure comprises 364 residues: Aminomethyltransferase (364 aa).

The protein belongs to the GcvT family. The glycine cleavage system is composed of four proteins: P, T, L and H.

The catalysed reaction is N(6)-[(R)-S(8)-aminomethyldihydrolipoyl]-L-lysyl-[protein] + (6S)-5,6,7,8-tetrahydrofolate = N(6)-[(R)-dihydrolipoyl]-L-lysyl-[protein] + (6R)-5,10-methylene-5,6,7,8-tetrahydrofolate + NH4(+). Its function is as follows. The glycine cleavage system catalyzes the degradation of glycine. The polypeptide is Aminomethyltransferase (Citrobacter koseri (strain ATCC BAA-895 / CDC 4225-83 / SGSC4696)).